A 193-amino-acid polypeptide reads, in one-letter code: MRLFGLILAGGEGRRMGGTDKASLTLGGRLLVTWVAERLGPQVEELAISANGDPARFAGLGLPVLRDEHPQGPLSGVLAGLRWAAAAGADALVTAPVDTPFVPGDLAPRLWLAGEGACAVAEAGGRVHPACGLWPVAVAEDLAAWLAAGEARVMGFAARHGAARAGFPDENAFLNLNAPEDLARAESLLRKDA.

GTP-binding positions include 8–10, lysine 21, aspartate 67, and aspartate 98; that span reads LAG. Residue aspartate 98 participates in Mg(2+) binding.

It belongs to the MobA family. In terms of assembly, monomer. Mg(2+) is required as a cofactor.

Its subcellular location is the cytoplasm. It catalyses the reaction Mo-molybdopterin + GTP + H(+) = Mo-molybdopterin guanine dinucleotide + diphosphate. Transfers a GMP moiety from GTP to Mo-molybdopterin (Mo-MPT) cofactor (Moco or molybdenum cofactor) to form Mo-molybdopterin guanine dinucleotide (Mo-MGD) cofactor. The sequence is that of Molybdenum cofactor guanylyltransferase from Cereibacter sphaeroides (strain ATCC 17029 / ATH 2.4.9) (Rhodobacter sphaeroides).